The chain runs to 347 residues: Syntaxin-32 (347 aa).

The Cytoplasmic segment spans residues 1–325 (MSARHGQSSY…RYLNSISSNR (325 aa)). 2 disordered regions span residues 172-191 (HESR…TNPF) and 208-251 (PLPW…QQMV). Composition is skewed to polar residues over residues 177 to 191 (QLFS…TNPF) and 213 to 222 (NGSSSSSSQL). Residues 237 to 249 (QQSQQQQQQQQQQ) show a composition bias toward low complexity. Residues 255–317 (DTYMQGRAEA…EGAQSQLARY (63 aa)) enclose the t-SNARE coiled-coil homology domain. A helical; Anchor for type IV membrane protein membrane pass occupies residues 326–346 (WLMMKIFFVLIAFLMIFLFFV). Position 347 (A347) is a topological domain, vesicular.

It belongs to the syntaxin family. In terms of assembly, part of the t-SNARE complex.

The protein resides in the golgi apparatus. It localises to the cis-Golgi network membrane. Its function is as follows. Vesicle trafficking protein that functions in the secretory pathway. The sequence is that of Syntaxin-32 (SYP32) from Arabidopsis thaliana (Mouse-ear cress).